A 166-amino-acid polypeptide reads, in one-letter code: Ureidoglycolate lyase (166 aa).

Belongs to the ureidoglycolate lyase family. As to quaternary structure, homodimer. Requires Ni(2+) as cofactor.

It catalyses the reaction (S)-ureidoglycolate = urea + glyoxylate. The protein operates within nitrogen metabolism; (S)-allantoin degradation. Its function is as follows. Catalyzes the catabolism of the allantoin degradation intermediate (S)-ureidoglycolate, generating urea and glyoxylate. Involved in the utilization of allantoin as nitrogen source. In Rhizobium etli (strain ATCC 51251 / DSM 11541 / JCM 21823 / NBRC 15573 / CFN 42), this protein is Ureidoglycolate lyase.